A 90-amino-acid chain; its full sequence is Small ribosomal subunit protein uS15c (90 aa).

The protein belongs to the universal ribosomal protein uS15 family. Part of the 30S ribosomal subunit.

The protein resides in the plastid. Its subcellular location is the chloroplast. The polypeptide is Small ribosomal subunit protein uS15c (rps15-A) (Lolium perenne (Perennial ryegrass)).